The following is a 201-amino-acid chain: Probable GTP-binding protein EngB (201 aa).

An EngB-type G domain is found at Pro21–Val191. GTP-binding positions include Gly29–Ser36, Gly56–Ser60, Asp75–Gly78, Thr142–Asp145, and Val168–Ser172. Positions 36 and 58 each coordinate Mg(2+).

The protein belongs to the TRAFAC class TrmE-Era-EngA-EngB-Septin-like GTPase superfamily. EngB GTPase family. Mg(2+) is required as a cofactor.

Its function is as follows. Necessary for normal cell division and for the maintenance of normal septation. The polypeptide is Probable GTP-binding protein EngB (Desulfovibrio desulfuricans (strain ATCC 27774 / DSM 6949 / MB)).